Reading from the N-terminus, the 249-residue chain is Triosephosphate isomerase (249 aa).

9 to 11 (NWK) contributes to the substrate binding site. The active-site Electrophile is His-94. Glu-166 acts as the Proton acceptor in catalysis. Residues Gly-172 and 232 to 233 (GG) each bind substrate.

Belongs to the triosephosphate isomerase family. Homodimer.

It is found in the cytoplasm. It carries out the reaction D-glyceraldehyde 3-phosphate = dihydroxyacetone phosphate. The protein operates within carbohydrate biosynthesis; gluconeogenesis. Its pathway is carbohydrate degradation; glycolysis; D-glyceraldehyde 3-phosphate from glycerone phosphate: step 1/1. Involved in the gluconeogenesis. Catalyzes stereospecifically the conversion of dihydroxyacetone phosphate (DHAP) to D-glyceraldehyde-3-phosphate (G3P). The sequence is that of Triosephosphate isomerase from Xylella fastidiosa (strain 9a5c).